Here is a 66-residue protein sequence, read N- to C-terminus: Large ribosomal subunit protein uL29 (66 aa).

This sequence belongs to the universal ribosomal protein uL29 family.

In Kosmotoga olearia (strain ATCC BAA-1733 / DSM 21960 / TBF 19.5.1), this protein is Large ribosomal subunit protein uL29.